The sequence spans 244 residues: Futalosine hydrolase (244 aa).

It belongs to the PNP/UDP phosphorylase family. Futalosine hydrolase subfamily.

It catalyses the reaction futalosine + H2O = dehypoxanthine futalosine + hypoxanthine. The protein operates within quinol/quinone metabolism; menaquinone biosynthesis. Catalyzes the hydrolysis of futalosine (FL) to dehypoxanthine futalosine (DHFL) and hypoxanthine, a step in the biosynthesis of menaquinone (MK, vitamin K2). Cannot directly use aminodeoxyfutalosine (AFL) as a substrate. In Acidothermus cellulolyticus (strain ATCC 43068 / DSM 8971 / 11B), this protein is Futalosine hydrolase.